The primary structure comprises 388 residues: Chorismate synthase (388 aa).

NADP(+)-binding residues include Arg-39 and Arg-45. FMN is bound by residues Arg-130 to Ser-132, Asn-251 to Ala-252, Gly-296, Lys-311 to Thr-315, and Arg-337.

This sequence belongs to the chorismate synthase family. In terms of assembly, homotetramer. FMNH2 serves as cofactor.

The catalysed reaction is 5-O-(1-carboxyvinyl)-3-phosphoshikimate = chorismate + phosphate. It functions in the pathway metabolic intermediate biosynthesis; chorismate biosynthesis; chorismate from D-erythrose 4-phosphate and phosphoenolpyruvate: step 7/7. Functionally, catalyzes the anti-1,4-elimination of the C-3 phosphate and the C-6 proR hydrogen from 5-enolpyruvylshikimate-3-phosphate (EPSP) to yield chorismate, which is the branch point compound that serves as the starting substrate for the three terminal pathways of aromatic amino acid biosynthesis. This reaction introduces a second double bond into the aromatic ring system. The protein is Chorismate synthase of Streptococcus agalactiae serotype V (strain ATCC BAA-611 / 2603 V/R).